The following is a 152-amino-acid chain: Protein Smg homolog (152 aa).

It belongs to the Smg family.

The protein is Protein Smg homolog of Bordetella bronchiseptica (strain ATCC BAA-588 / NCTC 13252 / RB50) (Alcaligenes bronchisepticus).